A 365-amino-acid polypeptide reads, in one-letter code: tRNA-specific 2-thiouridylase MnmA (365 aa).

ATP contacts are provided by residues 6 to 13 (AMSGGVDS) and Leu-32. Residue Cys-101 is the Nucleophile of the active site. Cys-101 and Cys-199 are oxidised to a cystine. Gly-125 is a binding site for ATP. The segment at 149-151 (KDQ) is interaction with tRNA. Residue Cys-199 is the Cysteine persulfide intermediate of the active site.

The protein belongs to the MnmA/TRMU family.

It is found in the cytoplasm. It catalyses the reaction S-sulfanyl-L-cysteinyl-[protein] + uridine(34) in tRNA + AH2 + ATP = 2-thiouridine(34) in tRNA + L-cysteinyl-[protein] + A + AMP + diphosphate + H(+). In terms of biological role, catalyzes the 2-thiolation of uridine at the wobble position (U34) of tRNA, leading to the formation of s(2)U34. This Corynebacterium glutamicum (strain R) protein is tRNA-specific 2-thiouridylase MnmA.